Reading from the N-terminus, the 138-residue chain is Large ribosomal subunit protein bL17 (138 aa).

The protein belongs to the bacterial ribosomal protein bL17 family. Part of the 50S ribosomal subunit. Contacts protein L32.

The sequence is that of Large ribosomal subunit protein bL17 from Dinoroseobacter shibae (strain DSM 16493 / NCIMB 14021 / DFL 12).